The primary structure comprises 259 residues: tRNA (guanine-N(7)-)-methyltransferase (259 aa).

Positions 1-11 are enriched in basic and acidic residues; that stretch reads MSNTDNSDKNT. The segment at 1 to 29 is disordered; it reads MSNTDNSDKNTKPTGYRPPQTDFNTEFGN. Positions 89, 114, 141, and 164 each coordinate S-adenosyl-L-methionine. The active site involves Asp164. Substrate is bound by residues Lys168, Asp200, and 238-241; that span reads TKFE.

This sequence belongs to the class I-like SAM-binding methyltransferase superfamily. TrmB family.

The catalysed reaction is guanosine(46) in tRNA + S-adenosyl-L-methionine = N(7)-methylguanosine(46) in tRNA + S-adenosyl-L-homocysteine. It functions in the pathway tRNA modification; N(7)-methylguanine-tRNA biosynthesis. Catalyzes the formation of N(7)-methylguanine at position 46 (m7G46) in tRNA. This Corynebacterium diphtheriae (strain ATCC 700971 / NCTC 13129 / Biotype gravis) protein is tRNA (guanine-N(7)-)-methyltransferase.